The primary structure comprises 44 residues: Poly-ADP-ribosylation-amplifying and CtIP-maintaining micropeptide (44 aa).

Residues 1–44 form a disordered region; the sequence is MAASGGTKKAQSGGRRLREPSSRPSRRARQRPRRGALRKAGRFL. Positions 24–44 are enriched in basic residues; that stretch reads PSRRARQRPRRGALRKAGRFL.

In terms of assembly, interacts with KLHL15; preventing ubiquitination and degradation of RBBP8/CtIP. Interacts with PARP1.

Its subcellular location is the nucleus. It localises to the nucleolus. The protein resides in the chromosome. In terms of biological role, micropeptide that acts as a regulator of DNA repair both by preventing KLHL15-mediated ubiquitination and degradation of RBBP8/CtIP, and by promoting the poly-ADP-ribosyltransferase activity of PARP1. Prevents KLHL15-mediated ubiquitination of RBBP8/CtIP by competitively blocking the association between KLHL15 and RBBP8/CtIP. Recruited to DNA damage sites via association with poly-ADP-ribose chains, and enhances the poly-ADP-ribosyltransferase activity of PARP1. The polypeptide is Poly-ADP-ribosylation-amplifying and CtIP-maintaining micropeptide (Homo sapiens (Human)).